The chain runs to 348 residues: MKNTFNTSNVFANAYSFWGYVIGFILSTSNRLYIGWFGILMFPLLVLATVAYIAAFIFAPPVDIDGIREPVAGALLYGNNIISGAVIPSSNAIGVHFYPVWEALGFDEWLYNGGTYQFVVLHFILGAGAYMGREWEFAFRLGMRPWIFVAFSAPLVAASAVFIVYPIGQGSFSDGMPLGISGTFNFMLVFQAEHNILMHPFHILGVAAVFGGSLFSAMHGSLVTSSLVAETAGDLSLNVGYNFGQEDETYSISAAHGYFGRLIFQYASFNNSRSLHFFLAAWPVIGIWFTALGVSTMAFNLNGLNFNQSIIDSSGHLINSWADIVNRADLGMEVMHERNAHNFPLDLA.

Transmembrane regions (helical) follow at residues 33-50, 122-137, and 146-160; these read YIGWFGILMFPLLVLATV, HFILGAGAYMGREWEF, and WIFVAFSAPLVAASA. His122 provides a ligand contact to chlorophyll a. Tyr130 contributes to the pheophytin a binding site. [CaMn4O5] cluster-binding residues include Asp174 and Glu193. The helical transmembrane segment at 201–222 threads the bilayer; sequence FHILGVAAVFGGSLFSAMHGSL. His202 is a binding site for chlorophyll a. A quinone contacts are provided by residues His219 and 268 to 269; that span reads SF. His219 contributes to the Fe cation binding site. His276 provides a ligand contact to Fe cation. The chain crosses the membrane as a helical span at residues 278 to 292; that stretch reads FLAAWPVIGIWFTAL. [CaMn4O5] cluster contacts are provided by His336, Glu337, Asp346, and Ala348.

The protein belongs to the reaction center PufL/M/PsbA/D family. In terms of assembly, PSII is composed of 1 copy each of membrane proteins PsbA, PsbB, PsbC, PsbD, PsbE, PsbF, PsbH, PsbI, PsbJ, PsbK, PsbL, PsbM, PsbT, PsbX, PsbY, PsbZ, Psb30/Ycf12, at least 3 peripheral proteins of the oxygen-evolving complex and a large number of cofactors. It forms dimeric complexes. It depends on The D1/D2 heterodimer binds P680, chlorophylls that are the primary electron donor of PSII, and subsequent electron acceptors. It shares a non-heme iron and each subunit binds pheophytin, quinone, additional chlorophylls, carotenoids and lipids. D1 provides most of the ligands for the Mn4-Ca-O5 cluster of the oxygen-evolving complex (OEC). There is also a Cl(-1) ion associated with D1 and D2, which is required for oxygen evolution. The PSII complex binds additional chlorophylls, carotenoids and specific lipids. as a cofactor. Post-translationally, tyr-165 forms a radical intermediate that is referred to as redox-active TyrZ, YZ or Y-Z.

The protein resides in the plastid. Its subcellular location is the chloroplast thylakoid membrane. It catalyses the reaction 2 a plastoquinone + 4 hnu + 2 H2O = 2 a plastoquinol + O2. Photosystem II (PSII) is a light-driven water:plastoquinone oxidoreductase that uses light energy to abstract electrons from H(2)O, generating O(2) and a proton gradient subsequently used for ATP formation. It consists of a core antenna complex that captures photons, and an electron transfer chain that converts photonic excitation into a charge separation. The D1/D2 (PsbA/PsbD) reaction center heterodimer binds P680, the primary electron donor of PSII as well as several subsequent electron acceptors. This chain is Photosystem II protein D1, found in Heterocapsa pygmaea (Dinoflagellate).